A 437-amino-acid polypeptide reads, in one-letter code: MTSVSVAFTNVAGLLAHGSKSRCRNAEVLRSRSAAERASGDRQRWRICMSDGERVHAYTETVVESQLGFSVSRRALLHHLALGALAVALPRSGALVAAPLAETVRGAAWKQVPLPTESVLFDIDFSQKDPNHGWLVGTRGLVLETRDGGETWEPRAFEDVEREEELNYRFSNVSFSGDEAWVIGKPPVMLRSTDGGKNWSRILLSPKLPGEPLLVTALGPNCAEMVTSSGAIYVTENGGINWKALVRETIDATLNRTISSGITGASYFTGSIVSVSRDVHGNYIAIPSRGNFFLTWVPGSDFWTPHARSTSRRISAIGFIQNDATKGIWETIRGGGLGFTKPNVNLNSTETIAFDMVDSKTGGYGILDVAFQDDRHVWAAVGGGSMYRSDDGGKTWRRDPLVSKVGANLYKIKFFGSQRGFVLGADGVLLKFHPENV.

It belongs to the Ycf48 family.

It is found in the plastid. The protein localises to the chloroplast thylakoid membrane. Its function is as follows. Essential for photosystem II (PSII) biogenesis; required for assembly of an early intermediate in PSII assembly that includes D2 (psbD) and cytochrome b559. This is Photosystem II stability/assembly factor HCF136, chloroplastic from Cyanidioschyzon merolae (strain NIES-3377 / 10D) (Unicellular red alga).